A 260-amino-acid polypeptide reads, in one-letter code: DNA repair protein RecO (260 aa).

Belongs to the RecO family.

Functionally, involved in DNA repair and RecF pathway recombination. The protein is DNA repair protein RecO of Chlorobaculum parvum (strain DSM 263 / NCIMB 8327) (Chlorobium vibrioforme subsp. thiosulfatophilum).